The primary structure comprises 514 residues: Probable type III restriction-modification enzyme HindVIP Res subunit (514 aa).

It belongs to the type III restriction-modification system Res protein family. In terms of assembly, contains two different subunits: Res and Mod. Mg(2+) serves as cofactor. The cofactor is S-adenosyl-L-methionine.

It carries out the reaction Endonucleolytic cleavage of DNA to give specific double-stranded fragments with terminal 5'-phosphates.. Functionally, a type III restriction enzyme that recognizes 2 inversely oriented double-stranded sequences 5'-CGAAT-3' and cleaves 25-27 base pairs downstream. After binding to one recognition site undergoes random one-dimensional diffusion along DNA until it collides with a stationary enzyme bound to the second DNA site, which is when DNA cleavage occurs. DNA restriction requires both the Res and Mod subunits. The polypeptide is Probable type III restriction-modification enzyme HindVIP Res subunit (Haemophilus influenzae (strain ATCC 51907 / DSM 11121 / KW20 / Rd)).